The primary structure comprises 554 residues: Polyamine aminopropyltransferase 2 (554 aa).

Positions 1 to 13 (MIEPHAPAPPGSP) are enriched in pro residues. The interval 1–20 (MIEPHAPAPPGSPPSWGGPC) is disordered. Helical transmembrane passes span 37 to 57 (FLVL…ELEL), 69 to 89 (VTQA…GSLA), 106 to 126 (AALA…FAWT), 139 to 159 (ILLV…VPLL), 184 to 204 (VGAL…LGQL), and 206 to 226 (GALL…LGLF). The segment at 235 to 516 (RWLLLTANAV…RTAPAPRLDP (282 aa)) is spermidine synthase. The 246-residue stretch at 247–492 (ALLATATVLA…SVPGPRRAAA (246 aa)) folds into the PABS domain. Gln281 is a binding site for S-methyl-5'-thioadenosine. His313 and Asp335 together coordinate spermidine. S-methyl-5'-thioadenosine is bound by residues Glu355 and 389-390 (DA). Asp408 acts as the Proton acceptor in catalysis. The tract at residues 476 to 495 (DTGPGPGSVPGPRRAAAGPP) is disordered. The segment covering 485–495 (PGPRRAAAGPP) has biased composition (low complexity).

Belongs to the spermidine/spermine synthase family. Homodimer or homotetramer.

It localises to the cell membrane. It carries out the reaction S-adenosyl 3-(methylsulfanyl)propylamine + putrescine = S-methyl-5'-thioadenosine + spermidine + H(+). The protein operates within amine and polyamine biosynthesis; spermidine biosynthesis; spermidine from putrescine: step 1/1. In terms of biological role, catalyzes the irreversible transfer of a propylamine group from the amino donor S-adenosylmethioninamine (decarboxy-AdoMet) to putrescine (1,4-diaminobutane) to yield spermidine. The polypeptide is Polyamine aminopropyltransferase 2 (Streptomyces coelicolor (strain ATCC BAA-471 / A3(2) / M145)).